We begin with the raw amino-acid sequence, 509 residues long: Probable cytochrome P450 6a14 (509 aa).

Position 454 (Cys454) interacts with heme.

It belongs to the cytochrome P450 family. Heme serves as cofactor.

Its subcellular location is the endoplasmic reticulum membrane. The protein localises to the microsome membrane. Its function is as follows. May be involved in the metabolism of insect hormones and in the breakdown of synthetic insecticides. In Drosophila melanogaster (Fruit fly), this protein is Probable cytochrome P450 6a14 (Cyp6a14).